Consider the following 562-residue polypeptide: Exonuclease subunit 2 (562 aa).

36–43 (GKNGGGKS) contributes to the ATP binding site.

The protein to phage T5 protein D13 and to yeast RAD52. As to quaternary structure, consists of two subunits: Gp47 and Gp46.

Exonuclease involved in phage DNA recombination, replication, and repair. The polypeptide is Exonuclease subunit 2 (46) (Escherichia phage RB69 (Bacteriophage RB69)).